The primary structure comprises 811 residues: Abnormal pharyngeal pumping eat-20 (811 aa).

Positions 1-20 (MTTFCRVLLIFGIYVAVSCA) are cleaved as a signal peptide. The Extracellular portion of the chain corresponds to 21-749 (QSVEDDVFHF…GKQSSAVASW (729 aa)). N-linked (GlcNAc...) asparagine glycans are attached at residues N90, N171, and N232. 3 consecutive EGF-like domains span residues 220–257 (PPSP…DRCE), 258–293 (LDVC…LLCE), and 301–335 (AAPI…ANCN). 9 disulfides stabilise this stretch: C224/C235, C229/C245, C247/C256, C261/C272, C266/C281, C283/C292, C305/C314, C309/C323, and C325/C334. Residue N371 is glycosylated (N-linked (GlcNAc...) asparagine). Disordered regions lie at residues 544-579 (FVSP…QVAT), 592-659 (FPTT…AIST), and 690-739 (PHPQ…HTSS). Positions 551–567 (DENEEEEEDETTDETEE) are enriched in acidic residues. Positions 570 to 579 (PTPSTMQVAT) are enriched in polar residues. Positions 597 to 612 (DMEETDEEEDMTEEVT) are enriched in acidic residues. The segment covering 626-639 (PSSTTFTTEAPTTT) has biased composition (low complexity). Acidic residues-rich tracts occupy residues 640–655 (MEEE…ESEE) and 705–717 (IESE…ESNE). Residues 750–770 (IIATIALIVLGSLLLATSLFV) form a helical membrane-spanning segment. Residues 771–811 (LRYIRQSRKLHGKYNPAREEHNLSAAYAMPMSHIAKEERLI) are Cytoplasmic-facing.

The protein resides in the membrane. Its function is as follows. Regulates pharyngeal pumping during feeding. This chain is Abnormal pharyngeal pumping eat-20 (eat-20), found in Caenorhabditis briggsae.